Here is a 333-residue protein sequence, read N- to C-terminus: uncharacterized protein (333 aa).

A coiled-coil region spans residues 94 to 122 (NLYREVWRELEEEQNKVEKLREYILKLDS).

This is an uncharacterized protein from Aquifex aeolicus (strain VF5).